The primary structure comprises 229 residues: Urease accessory protein UreG (229 aa).

24–31 (GPVGSGKT) provides a ligand contact to GTP.

This sequence belongs to the SIMIBI class G3E GTPase family. UreG subfamily. As to quaternary structure, homodimer. UreD, UreF and UreG form a complex that acts as a GTP-hydrolysis-dependent molecular chaperone, activating the urease apoprotein by helping to assemble the nickel containing metallocenter of UreC. The UreE protein probably delivers the nickel.

The protein resides in the cytoplasm. In terms of biological role, facilitates the functional incorporation of the urease nickel metallocenter. This process requires GTP hydrolysis, probably effectuated by UreG. The protein is Urease accessory protein UreG of Albidiferax ferrireducens (strain ATCC BAA-621 / DSM 15236 / T118) (Rhodoferax ferrireducens).